Consider the following 3630-residue polypeptide: Trimeric autotransporter adhesin AtaA (3630 aa).

The N-terminal stretch at 1–23 (MNKIYKVIWNATLLAWVAVSELA) is a signal peptide. A surface exposed passenger domain region spans residues 24-3487 (KGKTKSTTSK…TNQAVVNYLG (3464 aa)). Residues 108–315 (SIAIGENAQG…ASDAVTVAQL (208 aa)) form an N-terminal YadA-like head region. Positions 316-2904 (DKAYDDTNGR…GRAATEEQLK (2589 aa)) are N-terminal stalk. The interval 2905–3169 (AVITSNITEV…DSDAVNVAQL (265 aa)) is C-terminal YadA-like head. The interval 3170–3561 (KAVGNQVVTT…DVEKKANAGI (392 aa)) is C-terminal stalk. An outer membrane translocation of the passenger domain region spans residues 3539–3574 (LDNAFRITNNRIDDVEKKANAGIAAAMALESAPYVP). 4 beta stranded membrane passes run 3575 to 3585 (GKYTYAAGAAY), 3589 to 3599 (ENAVGVTLRKT), 3608 to 3614 (TGGVAAA), and 3618 to 3629 (DASVRIGISGVI). Residues 3575 to 3630 (GKYTYAAGAAYHGGENAVGVTLRKTADNGRWSITGGVAAASQGDASVRIGISGVID) form a translocator domain region.

Belongs to the autotransporter-2 (AT-2) (TC 1.B.40) family. As to quaternary structure, homotrimer. Interacts with TpgA.

The protein resides in the cell surface. Its subcellular location is the cell outer membrane. Its function is as follows. Responsible for autoagglutination, and for adhesion to abiotic and biotic surfaces such as polystyrene (PS), type I collagen, polypropylene (PP), polyvinylchloride (PVC), glass and stainless steel (SS). Adhesion is much stronger than that mediated by Yersinia YadA in a comparative assay. Confers autoagglutination and binding to PS, type I collagen, PP, PVC, glass and SS upon expression in Acinetobacter baylyi strain ADP1. Involved in rapid, irreversible adherence to polyurethane. Forms an unusual biofilm. An extended, surface exposed fiber binds to quartz crystals, PS and glass. It can be removed by washing in distilled water. The sequence is that of Trimeric autotransporter adhesin AtaA from Acinetobacter sp. (strain Tol 5).